We begin with the raw amino-acid sequence, 941 residues long: Protein translocase subunit SecA (941 aa).

ATP contacts are provided by residues Q87, 105–109, and D524; that span reads GEGKT. The interval 871–919 is disordered; the sequence is DEQPPMPAMEAHKLDPNTGEDQVAQAQSGLAPVAPAKRDPANPATWGKV. C925, C927, C936, and H937 together coordinate Zn(2+).

Belongs to the SecA family. Monomer and homodimer. Part of the essential Sec protein translocation apparatus which comprises SecA, SecYEG and auxiliary proteins SecDF-YajC and YidC. Requires Zn(2+) as cofactor.

It is found in the cell inner membrane. The protein localises to the cytoplasm. The catalysed reaction is ATP + H2O + cellular proteinSide 1 = ADP + phosphate + cellular proteinSide 2.. Functionally, part of the Sec protein translocase complex. Interacts with the SecYEG preprotein conducting channel. Has a central role in coupling the hydrolysis of ATP to the transfer of proteins into and across the cell membrane, serving both as a receptor for the preprotein-SecB complex and as an ATP-driven molecular motor driving the stepwise translocation of polypeptide chains across the membrane. This Afipia carboxidovorans (strain ATCC 49405 / DSM 1227 / KCTC 32145 / OM5) (Oligotropha carboxidovorans) protein is Protein translocase subunit SecA.